The following is a 572-amino-acid chain: Moesin/ezrin/radixin homolog 1 (572 aa).

The region spanning methionine 1–arginine 291 is the FERM domain. The segment at threonine 456–aspartate 491 is disordered. Residues glutamate 466 to valine 477 are compositionally biased toward acidic residues. Threonine 553 bears the Phosphothreonine mark.

Interacts with cytoskeletal actin.

It is found in the cell junction. The protein localises to the adherens junction. Its subcellular location is the cell projection. It localises to the microvillus. The protein resides in the rhabdomere. It is found in the cell membrane. The protein localises to the cytoplasm. Its subcellular location is the cytoskeleton. Involved in connections of major cytoskeletal structures to the plasma membrane. This Culex quinquefasciatus (Southern house mosquito) protein is Moesin/ezrin/radixin homolog 1.